Consider the following 313-residue polypeptide: Ribosomal RNA small subunit methyltransferase H (313 aa).

S-adenosyl-L-methionine contacts are provided by residues 51-53, aspartate 71, phenylalanine 98, aspartate 119, and glutamine 126; that span reads GGH. The disordered stretch occupies residues 293–313; that stretch reads EEQRANPRSRSARLRVAERVS.

It belongs to the methyltransferase superfamily. RsmH family.

It localises to the cytoplasm. It carries out the reaction cytidine(1402) in 16S rRNA + S-adenosyl-L-methionine = N(4)-methylcytidine(1402) in 16S rRNA + S-adenosyl-L-homocysteine + H(+). Its function is as follows. Specifically methylates the N4 position of cytidine in position 1402 (C1402) of 16S rRNA. This is Ribosomal RNA small subunit methyltransferase H from Roseiflexus sp. (strain RS-1).